Reading from the N-terminus, the 1482-residue chain is Glutamate receptor ionotropic, NMDA 2B (1482 aa).

The signal sequence occupies residues 1-26 (MKPSAECCSPKFWLVLAVLAVSGSKA). Residues 27 to 557 (RSQKSAPSIG…SAFLEPFSAD (531 aa)) are Extracellular-facing. The N-linked (GlcNAc...) asparagine glycan is linked to N74. An intrachain disulfide couples C86 to C321. H127 and E284 together coordinate Zn(2+). N-linked (GlcNAc...) asparagine glycans are attached at residues N341, N348, N444, and N491. Disulfide bonds link C429/C456 and C436/C457. Residues T514 and R519 each coordinate L-glutamate. N-linked (GlcNAc...) asparagine glycosylation occurs at N542. Residues 558–576 (VWVMMFVMLLIVSAVAVFV) form a helical membrane-spanning segment. The Cytoplasmic portion of the chain corresponds to 577-603 (FEYFSPVGYNRCLADGREPGGPSFTIG). The segment at residues 604-623 (KAIWLLWGLVFNNSVPVQNP) is an intramembrane region (discontinuously helical). The interval 604–623 (KAIWLLWGLVFNNSVPVQNP) is pore-forming. Residues 624-630 (KGTTSKI) are Cytoplasmic-facing. Residues 631-646 (MVSVWAFFAVIFLASY) form a helical membrane-spanning segment. Over 647–817 (TANLAAFMIQ…VMSSQLDIDN (171 aa)) the chain is Extracellular. N688 carries N-linked (GlcNAc...) asparagine glycosylation. L-glutamate contacts are provided by residues 690 to 691 (ST) and D732. Cysteines 746 and 801 form a disulfide. Residues 818 to 837 (MAGVFYMLGAAMALSLITFI) traverse the membrane as a helical segment. Residues 838–1482 (CEHLFYWQFR…EKLSSIESDV (645 aa)) are Cytoplasmic-facing. Phosphoserine is present on residues S882, S886, S917, and S920. 2 positions are modified to phosphotyrosine: Y962 and Y1039. Residues S1058, S1061, and S1064 each carry the phosphoserine modification. A disordered region spans residues 1074–1097 (EGNAAKRRKQQYKDSLKKRPASAK). A phosphotyrosine mark is found at Y1109 and Y1133. A Phosphoserine modification is found at S1143. The residue at position 1155 (Y1155) is a Phosphotyrosine. Residues 1162–1194 (FKRDSVSGGGPCTNRSHLKHGTGDKHGVVGGVP) are disordered. A phosphoserine mark is found at S1255 and S1259. Residues 1266–1277 (PAAPVAVSSNAS) are compositionally biased toward low complexity. The segment at 1266–1301 (PAAPVAVSSNASTTKYPQSPTNSKAQKKNRNKLRRQ) is disordered. Over residues 1278-1289 (TTKYPQSPTNSK) the composition is skewed to polar residues. The segment covering 1290–1301 (AQKKNRNKLRRQ) has biased composition (basic residues). The interval 1292–1304 (KKNRNKLRRQHSY) is interaction with DAPK1. Residue S1303 is modified to Phosphoserine; by DAPK1. Phosphotyrosine is present on Y1472. The PDZ-binding motif lies at 1480–1482 (SDV).

The protein belongs to the glutamate-gated ion channel (TC 1.A.10.1) family. NR2B/GRIN2B subfamily. Heterotetramer. Forms heterotetrameric channels composed of two GluN1/zeta subunits (GRIN1), and two identical GluN2/epsilon subunits (GRIN2A, GRIN2B, GRIN2C or GRIN2D) or GluN3 subunits (GRIN3A or GRIN3B) (in vitro). Can also form heterotetrameric channels that contain at least two GluN1 subunits and at least two different GluN2 subunits (or a combination of one GluN2 and one GluN3 subunits) (in vitro). In vivo, the subunit composition may depend on the expression levels of the different subunits. Found in a complex with GRIN1, GRIN3A and PPP2CB. Interacts with MAGI3. Interacts with HIP1 and NETO1. Interacts with PDZ domains of PATJ, DLG3 and DLG4. Interacts with DAPK1. Found in a complex with GRIN1 and PRR7. Interacts with PRR7. Interacts with CAMK2A. Interacts with ARC; preventing ARC oligomerization. Interacts with TMEM25. Interacts (via the extreme C-terminus) with FRMPD2 (via the second PDZ domain); the interaction is direct and is likely to promote NMDAR-mediated neural signal transmission. GRIN2A binds FRMPD2 with lower affinity than GRIN2B. Interacts with FAM81A; the interaction facilitates condensate formation via liquid-liquid phase separation. Post-translationally, phosphorylated on tyrosine residues. Phosphorylation at Ser-1303 by DAPK1 enhances synaptic NMDA receptor channel activity. In terms of tissue distribution, detected in brain (at protein level). Detected throughout the brain, and in brain stem trigeminal nucleus. Detected in forebrain.

The protein resides in the cell membrane. It localises to the postsynaptic cell membrane. It is found in the cell projection. The protein localises to the dendrite. Its subcellular location is the late endosome. The protein resides in the lysosome. It localises to the cytoplasm. It is found in the cytoskeleton. It carries out the reaction Ca(2+)(in) = Ca(2+)(out). The catalysed reaction is Na(+)(in) = Na(+)(out). The enzyme catalyses K(+)(in) = K(+)(out). Its function is as follows. Component of N-methyl-D-aspartate (NMDA) receptors (NMDARs) that function as heterotetrameric, ligand-gated cation channels with high calcium permeability and voltage-dependent block by Mg(2+). Participates in synaptic plasticity for learning and memory formation by contributing to the long-term depression (LTD) of hippocampus membrane currents. Channel activation requires binding of the neurotransmitter L-glutamate to the GluN2 subunit, glycine or D-serine binding to the GluN1 subunit, plus membrane depolarization to eliminate channel inhibition by Mg(2+). NMDARs mediate simultaneously the potasium efflux and the influx of calcium and sodium. Each GluN2 subunit confers differential attributes to channel properties, including activation, deactivation and desensitization kinetics, pH sensitivity, Ca2(+) permeability, and binding to allosteric modulators. In concert with DAPK1 at extrasynaptic sites, acts as a central mediator for stroke damage. Its phosphorylation at Ser-1303 by DAPK1 enhances synaptic NMDA receptor channel activity inducing injurious Ca2+ influx through them, resulting in an irreversible neuronal death. This Mus musculus (Mouse) protein is Glutamate receptor ionotropic, NMDA 2B.